A 555-amino-acid polypeptide reads, in one-letter code: Perforin-1 (555 aa).

Positions 1–21 (MAARLLLLGILLLLLPLPVPA) are cleaved as a signal peptide. 3 disulfides stabilise this stretch: cysteine 23/cysteine 76, cysteine 31/cysteine 73, and cysteine 102/cysteine 176. The 349-residue stretch at 27 to 375 (ARSECKRSHK…QYLTDRARWR (349 aa)) folds into the MACPF domain. A beta stranded membrane pass occupies residues 129–149 (WKVGLDVTPKPTSNVHVSVAG). Asparagine 205 carries an N-linked (GlcNAc...) asparagine glycan. 4 disulfides stabilise this stretch: cysteine 242–cysteine 408, cysteine 377–cysteine 393, cysteine 381–cysteine 395, and cysteine 397–cysteine 407. The chain crosses the membrane as a beta stranded span at residues 257-279 (CLTVEAQVNIGIHGSISAEAKAC). An EGF-like domain is found at 376–408 (DCSRPCPPGRQKSPRDPCQCVCHGSAVTTQDCC). The region spanning 397–519 (CHGSAVTTQD…CNLNHGHLKF (123 aa)) is the C2 domain. Residues glycine 429, aspartate 430, threonine 433, alanine 434, aspartate 436, aspartate 484, aspartate 486, aspartate 490, aspartate 491, and aspartate 492 each contribute to the Ca(2+) site. Disulfide bonds link cysteine 497-cysteine 510 and cysteine 525-cysteine 534. Asparagine 549 carries N-linked (GlcNAc...) asparagine glycosylation.

This sequence belongs to the complement C6/C7/C8/C9 family. As to quaternary structure, monomer, as soluble protein. Homooligomer; homooligomerizes to form a pore-forming ring. The cofactor is Ca(2+). N-glycosylated.

The protein localises to the cytolytic granule. It is found in the secreted. The protein resides in the cell membrane. It localises to the endosome lumen. Its function is as follows. Pore-forming protein that plays a key role in granzyme-mediated programmed cell death, and in defense against virus-infected or neoplastic cells. Plays an important role in killing other cells that are recognized as non-self by the immune system, e.g. in transplant rejection or some forms of autoimmune disease. Can insert into the membrane of target cells in its calcium-bound form, oligomerize and form large pores. Promotes cytolysis and apoptosis of target cells by mediating the passage and uptake of cytotoxic granzymes. Facilitates the delivery of cationic cargo protein, while anionic or neural proteins are not delivered efficiently. Perforin pores allow the release of mature caspase-7 (CASP7) into the extracellular milieu. This is Perforin-1 (PRF1) from Homo sapiens (Human).